The following is a 333-amino-acid chain: Probable tRNA-dihydrouridine synthase 1 (333 aa).

FMN-binding positions include 17-19 (PMA) and Gln-71. Catalysis depends on Cys-102, which acts as the Proton donor. Residues Lys-141, 202–204 (NGD), and 226–227 (GR) contribute to the FMN site.

Belongs to the Dus family. It depends on FMN as a cofactor.

It carries out the reaction a 5,6-dihydrouridine in tRNA + NAD(+) = a uridine in tRNA + NADH + H(+). The catalysed reaction is a 5,6-dihydrouridine in tRNA + NADP(+) = a uridine in tRNA + NADPH + H(+). Catalyzes the synthesis of 5,6-dihydrouridine (D), a modified base found in the D-loop of most tRNAs, via the reduction of the C5-C6 double bond in target uridines. This is Probable tRNA-dihydrouridine synthase 1 (dus1) from Bacillus subtilis (strain 168).